Consider the following 109-residue polypeptide: Nascent polypeptide-associated complex protein (109 aa).

The NAC-A/B domain occupies 3–69 (PMNPKQLKKL…TEEERVVLKI (67 aa)).

Belongs to the NAC-alpha family. As to quaternary structure, homodimer. Interacts with the ribosome. Binds ribosomal RNA.

Its function is as follows. Contacts the emerging nascent chain on the ribosome. In Pyrococcus abyssi (strain GE5 / Orsay), this protein is Nascent polypeptide-associated complex protein.